The following is a 407-amino-acid chain: Tyrosine--tRNA ligase (407 aa).

The 'HIGH' region signature appears at Pro-47–Ala-56. The short motif at Lys-231–Ser-235 is the 'KMSKS' region element. Lys-234 is an ATP binding site. An S4 RNA-binding domain is found at Pro-342–Leu-403.

Belongs to the class-I aminoacyl-tRNA synthetase family. TyrS type 2 subfamily. As to quaternary structure, homodimer.

Its subcellular location is the cytoplasm. It catalyses the reaction tRNA(Tyr) + L-tyrosine + ATP = L-tyrosyl-tRNA(Tyr) + AMP + diphosphate + H(+). Its function is as follows. Catalyzes the attachment of tyrosine to tRNA(Tyr) in a two-step reaction: tyrosine is first activated by ATP to form Tyr-AMP and then transferred to the acceptor end of tRNA(Tyr). The polypeptide is Tyrosine--tRNA ligase (Acidithiobacillus ferrooxidans (Thiobacillus ferrooxidans)).